A 548-amino-acid polypeptide reads, in one-letter code: Natural resistance-associated macrophage protein 1 (548 aa).

A disordered region spans residues 1-38; sequence MPGDMGPPKQGGTRYGSISSPPSPGPQQAPPGGTYLSE. The Cytoplasmic portion of the chain corresponds to 1 to 55; sequence MPGDMGPPKQGGTRYGSISSPPSPGPQQAPPGGTYLSEKIPIPDTESGAFSLRKL. Residues 56–73 form a helical membrane-spanning segment; the sequence is WAFTGPGFLMSIAFLDPG. Residues 74–82 lie on the Extracellular side of the membrane; it reads NIESDLQAG. Residues 83–102 form a helical membrane-spanning segment; it reads AVAGFKLLWVLLWATVLGLL. Over 103 to 139 the chain is Cytoplasmic; that stretch reads CQRLAARLGVVTGKDLGEVCHLYYPKVPRILLWLTIE. A helical membrane pass occupies residues 140 to 160; the sequence is LAIVGSDMQEVIGTAIAFSLL. The Extracellular segment spans residues 161-164; that stretch reads SAGR. The chain crosses the membrane as a helical span at residues 165–184; sequence IPLWGGVLITIVDTFFFLFL. Residues 185–193 are Cytoplasmic-facing; the sequence is DNYGLRKLE. The chain crosses the membrane as a helical span at residues 194–214; the sequence is AFFGFLITIMALTFGYEYVVA. The Extracellular portion of the chain corresponds to 215–237; the sequence is RPAQGALLQGLFLPSCAGCGQPE. The helical transmembrane segment at 238 to 256 threads the bilayer; it reads LLQAVGIVGAIIMPHNIYL. Over 257–284 the chain is Cytoplasmic; it reads HSSLVKSREVDRSRRADIREANMYFLIE. Residues 285–304 form a helical membrane-spanning segment; sequence ATIALSVSFLINLFVMAVFG. Topologically, residues 305-346 are extracellular; that stretch reads QAFYKQTNQAAFNICANSSLHDYATIFPRNNLTVAVDIYQGG. Residues N321 and N335 are each glycosylated (N-linked (GlcNAc...) asparagine). Residues 347–366 form a helical membrane-spanning segment; the sequence is VILGCLFGPAALYIWAVGLL. Residues 367-397 lie on the Cytoplasmic side of the membrane; the sequence is AAGQSSTMTGTYAGQFVMEGFLKLRWSRFAR. The chain crosses the membrane as a helical span at residues 398-415; sequence VLLTRSCAILPTVLVAVF. Residues 416–426 lie on the Extracellular side of the membrane; sequence RDLRDLSGLND. Residues 427-447 traverse the membrane as a helical segment; the sequence is LLNVLQSLLLPFAVLPILTFT. Topologically, residues 448 to 463 are cytoplasmic; the sequence is SMPAVMQEFANGLVSK. A helical membrane pass occupies residues 464 to 485; the sequence is VISSSIMVLVCAVNLYFVISYV. Over 486–493 the chain is Extracellular; it reads PSLPHPDY. Residues 494-513 traverse the membrane as a helical segment; the sequence is FSLVALLAAAYLGLTTYLVW. At 514–548 the chain is on the cytoplasmic side; sequence TCLITQGATLLAHSSHQRFLYGLPEEDQENGRTSG.

The protein belongs to the NRAMP family.

It localises to the late endosome membrane. Its subcellular location is the lysosome membrane. It catalyses the reaction Zn(2+)(in) + H(+)(out) = Zn(2+)(out) + H(+)(in). The enzyme catalyses Fe(2+)(in) + H(+)(out) = Fe(2+)(out) + H(+)(in). It carries out the reaction Mn(2+)(in) + H(+)(out) = Mn(2+)(out) + H(+)(in). Its function is as follows. Macrophage-specific antiporter that fluxes metal ions in either direction against a proton gradient. Localized to late endosomal lysosomal membranes, delivers bivalent cations from the cytosol into these acidic compartments where they may directly affect antimicrobial activity. Involved in iron metabolism and host natural resistance to infection with intracellular parasites. Pathogen resistance involves sequestration of Fe(2+) and Mn(2+), cofactors of both prokaryotic and eukaryotic catalases and superoxide dismutases, not only to protect the macrophage against its own generation of reactive oxygen species, but to deny the cations to the pathogen for synthesis of its protective enzymes. The polypeptide is Natural resistance-associated macrophage protein 1 (SLC11A1) (Cervus elaphus (Red deer)).